Consider the following 278-residue polypeptide: Non-heme chloroperoxidase (278 aa).

One can recognise an AB hydrolase-1 domain in the interval 24-259; it reads PIVFHHGWPL…LKTYPGYSHG (236 aa). Residues Ser-97, Asp-229, and His-258 contribute to the active site.

This sequence belongs to the AB hydrolase superfamily. Bacterial non-heme haloperoxidase / perhydrolase family. In terms of assembly, homodimer.

Functionally, chlorinates and brominates suitable organic compounds. Involved in the biosynthesis of the antibiotic pyrrolnitrin. This Burkholderia pyrrocinia (Pseudomonas pyrrocinia) protein is Non-heme chloroperoxidase (cpo).